The primary structure comprises 929 residues: Isoleucine--tRNA ligase (929 aa).

Positions 57–67 (PYANGNIHVGH) match the 'HIGH' region motif. L-isoleucyl-5'-AMP is bound at residue Glu-554. A 'KMSKS' region motif is present at residues 595–599 (KMSKS). Residue Lys-598 coordinates ATP. The Zn(2+) site is built by Cys-888, Cys-891, Cys-908, and Cys-911.

The protein belongs to the class-I aminoacyl-tRNA synthetase family. IleS type 1 subfamily. Monomer. It depends on Zn(2+) as a cofactor.

The protein resides in the cytoplasm. The enzyme catalyses tRNA(Ile) + L-isoleucine + ATP = L-isoleucyl-tRNA(Ile) + AMP + diphosphate. Its function is as follows. Catalyzes the attachment of isoleucine to tRNA(Ile). As IleRS can inadvertently accommodate and process structurally similar amino acids such as valine, to avoid such errors it has two additional distinct tRNA(Ile)-dependent editing activities. One activity is designated as 'pretransfer' editing and involves the hydrolysis of activated Val-AMP. The other activity is designated 'posttransfer' editing and involves deacylation of mischarged Val-tRNA(Ile). This chain is Isoleucine--tRNA ligase, found in Streptococcus thermophilus (strain ATCC BAA-491 / LMD-9).